The sequence spans 321 residues: Ferredoxin--NADP reductase (321 aa).

D34, Q42, Y47, V87, F119, D278, and T319 together coordinate FAD.

This sequence belongs to the ferredoxin--NADP reductase type 2 family. Homodimer. FAD serves as cofactor.

It catalyses the reaction 2 reduced [2Fe-2S]-[ferredoxin] + NADP(+) + H(+) = 2 oxidized [2Fe-2S]-[ferredoxin] + NADPH. The chain is Ferredoxin--NADP reductase from Streptococcus pneumoniae serotype 4 (strain ATCC BAA-334 / TIGR4).